The chain runs to 360 residues: SPRY domain-containing SOCS box protein 3 (360 aa).

A disordered region spans residues arginine 20–histidine 55. The B30.2/SPRY domain maps to leucine 85–arginine 274. In terms of domain architecture, SOCS box spans serine 264–tryptophan 315. Residues arginine 323–aspartate 350 form a disordered region. The span at threonine 331–threonine 346 shows a compositional bias: low complexity.

This sequence belongs to the SPSB family. In terms of assembly, substrate-recognition component of the ECS(SPSB3) complex, composed of spsb3, cul5, elob, elob and rnf7/rbx2.

The protein resides in the nucleus. The protein operates within protein modification; protein ubiquitination. Substrate-recognition component of a cullin-5-RING E3 ubiquitin-protein ligase complex (ECS complex, also named CRL5 complex), which mediates the ubiquitination and subsequent proteasomal degradation of target proteins. This Xenopus tropicalis (Western clawed frog) protein is SPRY domain-containing SOCS box protein 3 (spsb3).